The sequence spans 398 residues: Phosphoglycerate kinase (398 aa).

Substrate-binding positions include 21–23 (DFN), Arg-36, 59–62 (HLGR), Arg-119, and Arg-157. Residues Lys-208, Gly-296, Glu-327, and 354–357 (GGDS) contribute to the ATP site.

The protein belongs to the phosphoglycerate kinase family. In terms of assembly, monomer.

The protein localises to the cytoplasm. It catalyses the reaction (2R)-3-phosphoglycerate + ATP = (2R)-3-phospho-glyceroyl phosphate + ADP. It functions in the pathway carbohydrate degradation; glycolysis; pyruvate from D-glyceraldehyde 3-phosphate: step 2/5. This Streptococcus equi subsp. zooepidemicus (strain H70) protein is Phosphoglycerate kinase.